A 991-amino-acid chain; its full sequence is Regulator of telomere elongation helicase 1 homolog (991 aa).

The Helicase ATP-binding domain maps to 7–319; it reads NGIPVNFPFE…DDLVLLKEIL (313 aa). 42 to 49 provides a ligand contact to ATP; sequence SPTGTGKT. [4Fe-4S] cluster contacts are provided by C148, C166, C175, and C211. Residues 254–257 carry the DEAH box motif; the sequence is DEAH. The tract at residues 812–833 is disordered; the sequence is SMKVNPHSRSTKSAGDDAEAGG.

The protein belongs to the helicase family. RAD3/XPD subfamily.

The protein resides in the nucleus. The enzyme catalyses ATP + H2O = ADP + phosphate + H(+). A probable ATP-dependent DNA helicase implicated in DNA repair and the maintenance of genomic stability. Acts as an anti-recombinase to counteract toxic recombination and limit crossover during meiosis. Regulates meiotic recombination and crossover homeostasis by physically dissociating strand invasion events and thereby promotes noncrossover repair by meiotic synthesis dependent strand annealing (SDSA) as well as disassembly of D loop recombination intermediates. The polypeptide is Regulator of telomere elongation helicase 1 homolog (Anopheles gambiae (African malaria mosquito)).